Consider the following 299-residue polypeptide: ATP phosphoribosyltransferase (299 aa).

The protein belongs to the ATP phosphoribosyltransferase family. Long subfamily. Mg(2+) is required as a cofactor.

It localises to the cytoplasm. It carries out the reaction 1-(5-phospho-beta-D-ribosyl)-ATP + diphosphate = 5-phospho-alpha-D-ribose 1-diphosphate + ATP. It functions in the pathway amino-acid biosynthesis; L-histidine biosynthesis; L-histidine from 5-phospho-alpha-D-ribose 1-diphosphate: step 1/9. Feedback inhibited by histidine. Catalyzes the condensation of ATP and 5-phosphoribose 1-diphosphate to form N'-(5'-phosphoribosyl)-ATP (PR-ATP). Has a crucial role in the pathway because the rate of histidine biosynthesis seems to be controlled primarily by regulation of HisG enzymatic activity. The polypeptide is ATP phosphoribosyltransferase (Campylobacter jejuni subsp. jejuni serotype O:6 (strain 81116 / NCTC 11828)).